We begin with the raw amino-acid sequence, 942 residues long: MSVCLTEEQKRKIEENRQRALARRAERLAAQQNSQTNRSLSAPLNAQIPSGQQGVLPSAQSINATGTSRAANSKYAFQKSPSGGNTAPSVPGAAGNKVQAVGNRSHDSKSLTDPAKDVKGNYTVPEAQSVPSGPSNAPNPRHLYPAGTTPGQESAKHSNSYSRPEPLTACDNDTTGPGPLRSTTTITKFYGAGPGSKPAVPVSNKTVSEGRERGVTGSAAEAVPAKKASGATRGRCVKHAESRFRVEVGYSAELIALFKTIPSKNYDPATKMWNFGLEDYASLMSEVQQLQSVELKALEGMEGVQIAPPPATGGGTNINALLAMCNNWQRPSATLRGRCILVSRSRFEMEIGYHAEIIGLFKQMNTRNYDTKTRKWSFMLEDYQKLMESVRNIQQVEVEPLPRPVLQAFAPQFGKTTIIREEIPEVDLSQVDSKLGSNLMPFQRDGVNFAVSREGRLLLADDMGLGKTIQAICIAAYYRKEWPLLVVAPSSVRFTWAEAFQRWLPSIRPESVNVIVTGRDSQSASLINIVSFDLLGKMDKQIAATFQVIIIDESHFLKNVKTARCKAAMPLLKSAKRVMLLSGTPAMSRPAELYTQIAAVRPSFFPRFHDFGIRYCDAKQMPWGWDYSGSSNLNELKLLLEESIMIRRLKSEVLSQLPAKQRKMVVVAPEGITAKTKAALAAAAKEMAKGFKSKVQEKEALLLFYNRTAEAKIRSVLEYIMDLLESGREKFLVFAHHKLVLDHICEELGKKDVPYIRIDGNTSSADRQSLCHKFQMSEKSCVAVLSITAANMGLTLSSADLVVFAELFWNPGVLIQAEDRVHRIGQTSSVNIHYLVAKGTADDYLWPMIQEKIKVLGQAGLSEANFSETTESTDYFYKDPKQKTIYDLFQRSFSEEGAETNADEALLLEACEEADLGDAVCSPTDYSGNSCKRRKIDEYFAL.

The stretch at 5-29 (LTEEQKRKIEENRQRALARRAERLA) forms a coiled coil. The segment at 24–214 (RAERLAAQQN…KTVSEGRERG (191 aa)) is disordered. Composition is skewed to polar residues over residues 34–71 (SQTN…SRAA) and 79–88 (KSPSGGNTAP). Residues 104-119 (RSHDSKSLTDPAKDVK) show a composition bias toward basic and acidic residues. Composition is skewed to polar residues over residues 129–138 (SVPSGPSNAP), 149–162 (TPGQ…NSYS), and 171–187 (DNDT…TTIT). HARP domains follow at residues 228-299 (ASGA…KALE) and 331-402 (PSAT…EPLP). The Helicase ATP-binding domain maps to 448–603 (NFAVSREGRL…YTQIAAVRPS (156 aa)). 461 to 468 (DDMGLGKT) lines the ATP pocket. A DESH box motif is present at residues 552-555 (DESH). The Nuclear localization signal signature appears at 647–664 (RRLKSEVLSQLPAKQRKM). The Helicase C-terminal domain occupies 719-872 (YIMDLLESGR…EANFSETTES (154 aa)).

This sequence belongs to the SNF2/RAD54 helicase family. SMARCAL1 subfamily.

Its subcellular location is the nucleus. The enzyme catalyses ATP + H2O = ADP + phosphate + H(+). ATP-dependent annealing helicase that catalyzes the rewinding of the stably unwound DNA. Rewinds single-stranded DNA bubbles that are stably bound by replication protein A (RPA). Acts throughout the genome to reanneal stably unwound DNA, performing the opposite reaction of many enzymes, such as helicases and polymerases, that unwind DNA. This Xenopus tropicalis (Western clawed frog) protein is SWI/SNF-related matrix-associated actin-dependent regulator of chromatin subfamily A-like protein 1 (smarcal1).